Here is a 146-residue protein sequence, read N- to C-terminus: 1,4-dihydroxy-2-naphthoyl-CoA hydrolase (146 aa).

The active site involves aspartate 19.

The protein belongs to the 4-hydroxybenzoyl-CoA thioesterase family. DHNA-CoA hydrolase subfamily.

It catalyses the reaction 1,4-dihydroxy-2-naphthoyl-CoA + H2O = 1,4-dihydroxy-2-naphthoate + CoA + H(+). It functions in the pathway cofactor biosynthesis; phylloquinone biosynthesis. The protein operates within quinol/quinone metabolism; 1,4-dihydroxy-2-naphthoate biosynthesis; 1,4-dihydroxy-2-naphthoate from chorismate: step 7/7. Catalyzes the hydrolysis of 1,4-dihydroxy-2-naphthoyl-CoA (DHNA-CoA) to 1,4-dihydroxy-2-naphthoate (DHNA), a reaction involved in phylloquinone (vitamin K1) biosynthesis. In Thermosynechococcus vestitus (strain NIES-2133 / IAM M-273 / BP-1), this protein is 1,4-dihydroxy-2-naphthoyl-CoA hydrolase.